Consider the following 865-residue polypeptide: Protein translocase subunit SecA (865 aa).

ATP contacts are provided by residues Gln93, 111–115 (GEGKT), and Asp501. Zn(2+) contacts are provided by Cys841, Cys843, Cys852, and Cys853.

The protein belongs to the SecA family. In terms of assembly, monomer and homodimer. Part of the essential Sec protein translocation apparatus which comprises SecA, SecYEG and auxiliary proteins SecDF-YajC and YidC. Zn(2+) is required as a cofactor.

The protein localises to the cell inner membrane. The protein resides in the cytoplasm. The enzyme catalyses ATP + H2O + cellular proteinSide 1 = ADP + phosphate + cellular proteinSide 2.. Part of the Sec protein translocase complex. Interacts with the SecYEG preprotein conducting channel. Has a central role in coupling the hydrolysis of ATP to the transfer of proteins into and across the cell membrane, serving as an ATP-driven molecular motor driving the stepwise translocation of polypeptide chains across the membrane. This chain is Protein translocase subunit SecA, found in Helicobacter pylori (strain J99 / ATCC 700824) (Campylobacter pylori J99).